The following is a 318-amino-acid chain: MAFSWQEQIKPAGTQDIQCDIEYLDKSYIHVYLDGAETTGYTWTSATNIRLNTALAASTTVLLIRKTEREYLYIEFASGSPFIEVNVDSQNTQFLHLAQELVEGRAIPGFYGTISMNGYRITDLANPINAQDAATKAYVDTADTLLGQRIDAEHSGWVSAVHAEAVTRKAADDALSMRTSALENTFISGVETVSYPWSAVLTAATDEVTPGLAFTKAVVEINGVGQIRGYSFEIVDNTILFAEVLPAGTVVAARLGADVTAGDGFATQASVDYLANSLGDLAYLDKAAAVSDATSTGDVVAKLNALLAALRTSGVLAT.

It is found in the virion. In terms of biological role, anchors indirectly the receptor binding (RBP) protein (depolymerase) to the virion. The sequence is that of Anchor protein from Klebsiella pneumoniae (Bacteriophage NTUH-K2044-K1-1).